The following is a 118-amino-acid chain: Large ribosomal subunit protein bL20 (118 aa).

The protein belongs to the bacterial ribosomal protein bL20 family. As to quaternary structure, part of the 50S ribosomal subunit. Contacts proteins L13 and L21.

Its function is as follows. Binds directly to 23S rRNA, probably serving to organize its structure. The protein is Large ribosomal subunit protein bL20 (rplT) of Deinococcus radiodurans (strain ATCC 13939 / DSM 20539 / JCM 16871 / CCUG 27074 / LMG 4051 / NBRC 15346 / NCIMB 9279 / VKM B-1422 / R1).